Consider the following 124-residue polypeptide: Small ribosomal subunit protein uS12 (124 aa).

A 3-methylthioaspartic acid modification is found at Asp-89.

The protein belongs to the universal ribosomal protein uS12 family. Part of the 30S ribosomal subunit. Contacts proteins S8 and S17. May interact with IF1 in the 30S initiation complex.

With S4 and S5 plays an important role in translational accuracy. In terms of biological role, interacts with and stabilizes bases of the 16S rRNA that are involved in tRNA selection in the A site and with the mRNA backbone. Located at the interface of the 30S and 50S subunits, it traverses the body of the 30S subunit contacting proteins on the other side and probably holding the rRNA structure together. The combined cluster of proteins S8, S12 and S17 appears to hold together the shoulder and platform of the 30S subunit. This Moorella thermoacetica (strain ATCC 39073 / JCM 9320) protein is Small ribosomal subunit protein uS12.